Here is a 1087-residue protein sequence, read N- to C-terminus: Ubiquitin-associated protein 2-like (1087 aa).

Residue Met1 is modified to N-acetylmethionine. A disordered region spans residues Met1–Ala33. The region spanning Asp49–Gly89 is the UBA domain. The segment at Asp92–Thr234 is disordered. A compositionally biased stretch (basic and acidic residues) spans Glu118–Arg132. Residues Arg133–Ser145 show a composition bias toward basic residues. Asymmetric dimethylarginine occurs at positions 187 and 190. Over residues Asn213 to Gly226 the composition is skewed to low complexity. A phosphoserine mark is found at Ser356 and Ser360. A compositionally biased stretch (low complexity) spans Ala377 to Ser389. Positions Ala377 to Lys420 are disordered. A compositionally biased stretch (polar residues) spans Trp390–Leu401. Residues Ser410 and Ser416 each carry the phosphoserine modification. Thr425 bears the Phosphothreonine mark. Residues Ser439, Ser454, Ser467, Ser470, Ser471, and Ser477 each carry the phosphoserine modification. Disordered stretches follow at residues Pro440–Ser493, Ser530–Leu656, and Thr669–Gly794. Composition is skewed to low complexity over residues Gln474–Leu485 and Ser534–Ser569. Positions Gly570–Leu656 are enriched in polar residues. Ser604, Ser605, Ser608, and Ser609 each carry phosphoserine. Over residues Thr688–Ser784 the composition is skewed to low complexity. 2 positions are modified to phosphoserine: Ser852 and Ser859. The disordered stretch occupies residues Phe865 to Ala901. Residues Pro873–Thr896 are compositionally biased toward low complexity. An omega-N-methylarginine mark is found at Ser962 and Val969. Val969 and Thr976 each carry N6-acetyllysine. The segment at Gln1040 to Asn1087 is disordered. A compositionally biased stretch (low complexity) spans Gln1053–Ser1067. Residues Ile1068–Asn1087 are compositionally biased toward polar residues.

Interacts with BMI1. Part of a complex consisting of UBAP2L, BMI1 and RNF2. Interacts with G3BP1 (via NTF2 domain); promoting stress granule formation. Post-translationally, acetylated. Ubiquitous.

Its subcellular location is the nucleus. The protein localises to the chromosome. It localises to the cytoplasm. It is found in the stress granule. Functionally, recruits the ubiquitination machinery to RNA polymerase II for polyubiquitination, removal and degradation, when the transcription-coupled nucleotide excision repair (TC-NER) machinery fails to resolve DNA damage. Plays an important role in the activity of long-term repopulating hematopoietic stem cells (LT-HSCs). Is a regulator of stress granule assembly, required for their efficient formation. Required for proper brain development and neocortex lamination. The protein is Ubiquitin-associated protein 2-like of Homo sapiens (Human).